The chain runs to 306 residues: MWFRNLLVYRLTQDLQLDADALEKALGEKPARPCASQELTTYGFTAPFGKGPDAPLVHVSQDFFLVSARKEERILPGSVVRDALKEKVDEIEAQQMRKVYKKERDQLKDEIVQTLLPRAFIRRSSTFAAIAPSLGLILVDSASAKKAEDLLSTLREALGSLPVRPLSVKVAPTATLTDWVKTQEAAGDFHVLDECELRDTHEDGGVVRCKRQDLTSEEIQLHLTAGKLVTQLSLAWSDKLSFVLDDKLAVKRLRFEDLLQEQAEKDGGEDALGQLDASFTLMMLTFAEFLPALFEALGGEEIPQGV.

The protein belongs to the RdgC family.

The protein resides in the cytoplasm. It localises to the nucleoid. Its function is as follows. May be involved in recombination. The sequence is that of Recombination-associated protein RdgC from Pseudomonas paraeruginosa (strain DSM 24068 / PA7) (Pseudomonas aeruginosa (strain PA7)).